Here is a 227-residue protein sequence, read N- to C-terminus: NAD(P)H-quinone oxidoreductase subunit K, chloroplastic (227 aa).

Residues cysteine 43, cysteine 44, cysteine 108, and cysteine 139 each contribute to the [4Fe-4S] cluster site.

It belongs to the complex I 20 kDa subunit family. NDH is composed of at least 16 different subunits, 5 of which are encoded in the nucleus. The cofactor is [4Fe-4S] cluster.

Its subcellular location is the plastid. The protein localises to the chloroplast thylakoid membrane. The catalysed reaction is a plastoquinone + NADH + (n+1) H(+)(in) = a plastoquinol + NAD(+) + n H(+)(out). It carries out the reaction a plastoquinone + NADPH + (n+1) H(+)(in) = a plastoquinol + NADP(+) + n H(+)(out). NDH shuttles electrons from NAD(P)H:plastoquinone, via FMN and iron-sulfur (Fe-S) centers, to quinones in the photosynthetic chain and possibly in a chloroplast respiratory chain. The immediate electron acceptor for the enzyme in this species is believed to be plastoquinone. Couples the redox reaction to proton translocation, and thus conserves the redox energy in a proton gradient. This Drimys granadensis protein is NAD(P)H-quinone oxidoreductase subunit K, chloroplastic.